The primary structure comprises 314 residues: Ribosomal RNA small subunit methyltransferase H (314 aa).

S-adenosyl-L-methionine contacts are provided by residues 36–38, D56, F83, D104, and Q111; that span reads GGH.

It belongs to the methyltransferase superfamily. RsmH family.

It is found in the cytoplasm. It catalyses the reaction cytidine(1402) in 16S rRNA + S-adenosyl-L-methionine = N(4)-methylcytidine(1402) in 16S rRNA + S-adenosyl-L-homocysteine + H(+). Its function is as follows. Specifically methylates the N4 position of cytidine in position 1402 (C1402) of 16S rRNA. The polypeptide is Ribosomal RNA small subunit methyltransferase H (Syntrophotalea carbinolica (strain DSM 2380 / NBRC 103641 / GraBd1) (Pelobacter carbinolicus)).